The primary structure comprises 520 residues: Glutamate--cysteine ligase (520 aa).

The protein belongs to the glutamate--cysteine ligase type 1 family. Type 1 subfamily.

It catalyses the reaction L-cysteine + L-glutamate + ATP = gamma-L-glutamyl-L-cysteine + ADP + phosphate + H(+). Its pathway is sulfur metabolism; glutathione biosynthesis; glutathione from L-cysteine and L-glutamate: step 1/2. In Serratia proteamaculans (strain 568), this protein is Glutamate--cysteine ligase.